The chain runs to 939 residues: MFGNCQKQNCCTQRNNTGICYSVCPPQTVITVPGNVTCNASRIYVNIGRPNNCFGNDGDLYLDTNTNNLYYKRDGVWLLVGNLSGSSGPSGPQGPKGEKGSNGDKGDKGEIGIQGLKGESGADADKGDKGDKGDKGSKGTKGENGDKGNKGDKGDPGIKGSKGEKGSKGDKGSKGDKGDPGIKGESGADADKGDKGDKGSKGDKGDKGIDGNKGEKGSKGDKGDKGDIGLKGESGADADKGDKGDKGSKGDKGDKGDIGPKGESGADADKGDKGDKGSKGDKGDKGTKGESGLIGTKGDKGDKGDKGIKGDKGEAGTSILEGSGVPSPDLGNNGDLYIDGMTGLLYAKINDEWVPVTSIKGDKGDKGDTGLKGESGADADKGEKGDPGNKGDKGNKGDKGSKGDKGDKGDKGDTGLKGESGADADKGDKGGKGEKGDNGEKGSKGEKGEKGEKGDNGEKGDKGDNGEKGEKGEKGEKGDNGEKGEKGDVGIKGESGADADKGDKGEKGDKGVNGDKGDKGSKGDTGIKGEAGTAANKGDKGSKGDKGDKGSKGDIGISIKGDKGDKGDKGSKGDKGDIGIKGESGLSIKGDKGDKGGKGDKGDLGSKGDIGLKGDKGDKGDVGLKGDKGDKGDVGSKGDKGDKGSKGDKGSKGDTGSKGDKGDKGSKGDKGDKGDKGSKGDKGDIGSIGPKGEKGEAGSTNSLYIGSAQLGNAGDFNNEIIPVTGIAYITAVGAGGSGYSGTTGGYGGGGAGGAFINYPVYVSSSQTYSAHVGFGGAQVAGNSNKGENTTITIGNLVLLAGGGEGGTATTGGTGGLVSINGTQITAGAPGGTSGNSGVSSIYINPLVIGGAGGGGGSNGTNAGNGGNYAGFTGGIASPGVNGGGGGGASLFSNGFNGETGAPTTDSGTNYGAGGGGGGNGTQGGNGSLGYVRIDFYSAP.

4 N-linked (GlcNAc...) asparagine; by host glycosylation sites follow: Asn-15, Asn-35, Asn-39, and Asn-82. Residues 84–95 are compositionally biased toward low complexity; that stretch reads SGSSGPSGPQGP. Disordered regions lie at residues 84–332 and 358–697; these read SGSS…DLGN and SIKG…KGEA. 8 consecutive Collagen-like domains span residues 88 to 147, 148 to 207, 211 to 330, 364 to 423, 427 to 486, 493 to 552, 564 to 622, and 638 to 697; these read GPSG…NGDK, GNKG…KGDK, GNKG…SPDL, GDKG…SGAD, GDKG…KGEK, GESG…KGSK, GDKG…KGDV, and GDKG…KGEA. Basic and acidic residues-rich tracts occupy residues 96–110, 123–182, 189–230, 237–260, 267–288, 297–314, 360–371, 378–416, 423–491, 498–527, 537–552, 560–580, and 589–684; these read KGEKGSNGDKGDKGE, DADK…DPGI, DADK…DIGL, DADKGDKGDKGSKGDKGDKGDIGP, DADKGDKGDKGSKGDKGDKGTK, KGDKGDKGDKGIKGDKGE, KGDKGDKGDTGL, DADKGEKGDPGNKGDKGNKGDKGSKGDKGDKGDKGDTGL, DADK…DVGI, DADKGDKGEKGDKGVNGDKGDKGSKGDTGI, KGDKGSKGDKGDKGSK, KGDKGDKGDKGSKGDKGDIGI, and KGDK…DKGD. N-linked (GlcNAc...) asparagine; by host glycosylation is found at Asn-788, Asn-820, Asn-858, Asn-919, and Asn-925. The interval 896-923 is disordered; the sequence is NGETGAPTTDSGTNYGAGGGGGGNGTQG. Positions 910–923 are enriched in gly residues; that stretch reads YGAGGGGGGNGTQG.

May be hydroxylated on lysine by the viral-encoded procollagen-lysine,2-oxoglutarate 5-dioxygenase.

The protein localises to the virion. May participate in the formation of a layer of cross-linked glycosylated fibrils at the viral surface thus giving it a hairy-like appearance. The protein is Collagen-like protein 3 of Acanthamoeba polyphaga (Amoeba).